The following is a 433-amino-acid chain: MAIDGSGVATPAPSGITVIIVGLGPTGLAAAIECHRRGHKVICFEKNPKSYRLGDLISVTGNAVRVLQEWGNGSVIKELQAFQCNLDTLEVYNETGDLKLSAPYNATQAKDEYMLRRSRLLDIFLQHLKSLGVEIHLGIQVADYWETESSAGVTVGGEKIVGDCVVVADGVHSKGRPQVSGEPFALEATDGIAFRAFFNASEISQDPEASWILRDAGEKDCFKTFYGKGLVMMVGTAENHEYVFWSCGHKENVMAHPSSVATVLDLIRDWPVSTRLAPLISKTPGDNCLNQTLYTRPPLKKWVSSNGRMIVLGDAAHPFLPHAGQGANQGIEDGAVLALCLEITSKKDVPLALRVTEKLRYQRVAAIQQRGVEARDQSLNVDWGNGGFSKKLTLHPAWLHDHDCIKQVYEEFDKAADAVTKGHEHTFGGIPVG.

Positions 45 and 117 each coordinate FAD. Arginine 195 is an active-site residue. Aspartate 314 and alanine 327 together coordinate FAD.

Belongs to the paxM FAD-dependent monooxygenase family. FAD is required as a cofactor.

The protein operates within alkaloid biosynthesis. FAD-dependent monooxygenase; part of the gene cluster that mediates the biosynthesis of notoamide, a fungal indole alkaloid that belongs to a family of natural products containing a characteristic bicyclo[2.2.2]diazaoctane core. The first step of notoamide biosynthesis involves coupling of L-proline and L-tryptophan by the bimodular NRPS notE, to produce cyclo-L-tryptophan-L-proline called brevianamide F. The reverse prenyltransferase notF then acts as a deoxybrevianamide E synthase and converts brevianamide F to deoxybrevianamide E via reverse prenylation at C-2 of the indole ring leading to the bicyclo[2.2.2]diazaoctane core. Deoxybrevianamide E is further hydroxylated at C-6 of the indole ring, likely catalyzed by the cytochrome P450 monooxygenase notG, to yield 6-hydroxy-deoxybrevianamide E. 6-hydroxy-deoxybrevianamide E is a specific substrate of the prenyltransferase notC for normal prenylation at C-7 to produce 6-hydroxy-7-prenyl-deoxybrevianamide, also called notoamide S. As the proposed pivotal branching point in notoamide biosynthesis, notoamide S can be diverted to notoamide E through an oxidative pyran ring closure putatively catalyzed by either notH cytochrome P450 monooxygenase or the notD FAD-linked oxidoreductase. This step would be followed by an indole 2,3-epoxidation-initiated pinacol-like rearrangement catalyzed by the notB FAD-dependent monooxygenase leading to the formation of notoamide C and notoamide D. On the other hand notoamide S is converted to notoamide T by notH (or notD), a bifunctional oxidase that also functions as the intramolecular Diels-Alderase responsible for generation of (+)-notoamide T. To generate antipodal (-)-notoaminide T, notH' (or notD') in Aspergillus versicolor is expected to catalyze a Diels-Alder reaction leading to the opposite stereochemistry. The remaining oxidoreductase notD (or notH) likely catalyzes the oxidative pyran ring formation to yield (+)-stephacidin A. The FAD-dependent monooxygenase notI is highly similar to notB and is predicted to catalyze a similar conversion from (+)-stephacidin A to (-)-notoamide B via the 2,3-epoxidation of (+)-stephacidin A followed by a pinacol-type rearrangement. Finally, it remains unclear which enzyme could be responsible for the final hydroxylation steps leading to notoamide A and sclerotiamide. The polypeptide is FAD-dependent monooxygenase notI (Aspergillus sp. (strain MF297-2)).